We begin with the raw amino-acid sequence, 344 residues long: Protein POLAR LOCALIZATION DURING ASYMMETRIC DIVISION AND REDISTRIBUTION (344 aa).

Threonine 19 carries the post-translational modification Phosphothreonine; by ASK7. Serine 79 carries the phosphoserine; by ASK7 modification. Phosphothreonine; by ASK7 is present on residues threonine 84 and threonine 86. Serine 91 and serine 94 each carry phosphoserine; by ASK7. Threonine 193, threonine 217, and threonine 233 each carry phosphothreonine; by ASK7. Position 235 is a phosphoserine; by ASK7 (serine 235). Residues 262–297 (LETRQQEELVKLETALNRVERRLQEKETEVSWWKDA) are a coiled coil. 5 positions are modified to phosphoserine; by ASK7: serine 308, serine 309, serine 320, serine 321, and serine 336.

As to quaternary structure, component of a complex made of POLAR, BASL, ASK7/BIN2 and ASK3/SK12. Interacts with BASL, ASK7/BIN2 and ASK3/SK12. Phosphorylation by ASK7/BIN2 is increases turnover. Expressed in stomatal lineage cells with asymmetric division potential.

Its subcellular location is the cytoplasm. The protein resides in the cell cortex. In terms of biological role, regulates asymmetric cell division (ACD), especially in stomatal-lineage cells. Acts as a stomatal lineage scaffold which regulates subcellular localization and transient polarization of kinases (e.g. ASK7/BIN2 and ASK3/SK12) involved in ACD in a BASL-dependent manner. Promotes the differentiation of both pavement cells and stomata. This chain is Protein POLAR LOCALIZATION DURING ASYMMETRIC DIVISION AND REDISTRIBUTION, found in Arabidopsis thaliana (Mouse-ear cress).